We begin with the raw amino-acid sequence, 432 residues long: Adenylosuccinate synthetase (432 aa).

GTP is bound by residues Gly13–Lys19 and Gly41–Thr43. Catalysis depends on Asp14, which acts as the Proton acceptor. Positions 14 and 41 each coordinate Mg(2+). IMP is bound by residues Asp14–Lys17, Asn39–His42, Thr131, Arg145, Gln226, Thr241, and Arg305. His42 serves as the catalytic Proton donor. Ser301 to Arg307 serves as a coordination point for substrate. Residues Arg307, Lys333–Asp335, and Ser416–Gly418 contribute to the GTP site.

It belongs to the adenylosuccinate synthetase family. In terms of assembly, homodimer. The cofactor is Mg(2+).

The protein resides in the cytoplasm. It catalyses the reaction IMP + L-aspartate + GTP = N(6)-(1,2-dicarboxyethyl)-AMP + GDP + phosphate + 2 H(+). It functions in the pathway purine metabolism; AMP biosynthesis via de novo pathway; AMP from IMP: step 1/2. In terms of biological role, plays an important role in the de novo pathway of purine nucleotide biosynthesis. Catalyzes the first committed step in the biosynthesis of AMP from IMP. The polypeptide is Adenylosuccinate synthetase (Neisseria meningitidis serogroup B (strain ATCC BAA-335 / MC58)).